Here is a 5218-residue protein sequence, read N- to C-terminus: HC-toxin synthetase (5218 aa).

Residues 223-620 (SARAHEQDAN…VGRSDTQIKL (398 aa)) form an adenylation 1 region. Positions 769–843 (MNDDSLLLTA…TAASCIKSAQ (75 aa)) constitute a Carrier 1 domain. Ser-803 bears the O-(pantetheine 4'-phosphoryl)serine mark. Residues 858-1154 (IPVSPIQKLF…GWFTTISPVY (297 aa)) are condensation 1. The tract at residues 1338-1806 (EGVYPGSPMQ…LPIVSEHDTA (469 aa)) is epimerization. The segment at 1828–2233 (SRKVVEHPQR…IGRKDTQVKM (406 aa)) is adenylation 2. The region spanning 2379 to 2453 (ETTDTVEDRL…DMAKLFSHGQ (75 aa)) is the Carrier 2 domain. O-(pantetheine 4'-phosphoryl)serine is present on Ser-2414. Residues 2531-2929 (EDVFPCTPMQ…MEQFGHNLQT (399 aa)) are condensation 2. The tract at residues 2979-3386 (LEETAQSQPA…GRKDGQIKLR (408 aa)) is adenylation 3. Residues 3532–3608 (QVLTTNESVL…DMAGQISFVQ (77 aa)) enclose the Carrier 3 domain. An O-(pantetheine 4'-phosphoryl)serine modification is found at Ser-3569. A condensation 3 region spans residues 3649–4102 (EDVYPCTPLQ…PALSEAHLAE (454 aa)). The interval 4134 to 4530 (RRAQQSPNSQ…NLYYVRRKDS (397 aa)) is adenylation 4. The Carrier 4 domain occupies 4666–4740 (THTQKLLRQL…AMSSLIDEHN (75 aa)). Ser-4701 carries the O-(pantetheine 4'-phosphoryl)serine modification. Positions 4785–5101 (TLPCTEYQQM…SAIREFIPQA (317 aa)) are condensation 4.

It belongs to the NRP synthetase family. The cofactor is pantetheine 4'-phosphate.

Its pathway is mycotoxin biosynthesis; HC-toxin biosynthesis. Non-ribosomal peptide synthetase, part of the diffuse TOX2 gene cluster that mediates the biosynthesis of the HC-toxin, cyclic tetrapeptide of structure cyclo(D-Pro-L-Ala-D-Ala-L-Aeo), where Aeo stands for 2-amino-9,10-epoxi-8-oxodecanoic acid. HC-toxin is a determinant of specificity and virulence in the interaction between the producing fungus and its host, maize. HTS1, contains four modules, one for each amino acid in HC-toxin, with the order of activation being most likely Pro, Ala, Ala, and Aeo. In addition, HTS1 has one epimerase domain between modules 1 and 2, which is responsible for epimerizing L-Pro to D-Pro. The absence of an epimerizing domain after module 3, for producing D-Ala, can be explained by the presence in the cluster of TOXG, an Ala racemase, which produces D-Ala for incorporation by HTS1 into HC-toxin. The protein is HC-toxin synthetase of Cochliobolus carbonum (Maize leaf spot fungus).